A 454-amino-acid chain; its full sequence is NADP-specific glutamate dehydrogenase (454 aa).

Position 2 is an N-acetylserine (Ser-2). Residue Lys-114 is part of the active site.

It belongs to the Glu/Leu/Phe/Val dehydrogenases family. As to quaternary structure, homohexamer.

It catalyses the reaction L-glutamate + NADP(+) + H2O = 2-oxoglutarate + NH4(+) + NADPH + H(+). In Neurospora sitophila (Chrysonilia sitophila), this protein is NADP-specific glutamate dehydrogenase (GDH).